A 118-amino-acid chain; its full sequence is Large ribosomal subunit protein uL18 (118 aa).

It belongs to the universal ribosomal protein uL18 family. Part of the 50S ribosomal subunit; part of the 5S rRNA/L5/L18/L25 subcomplex. Contacts the 5S and 23S rRNAs.

In terms of biological role, this is one of the proteins that bind and probably mediate the attachment of the 5S RNA into the large ribosomal subunit, where it forms part of the central protuberance. The sequence is that of Large ribosomal subunit protein uL18 from Brachyspira hyodysenteriae (strain ATCC 49526 / WA1).